Consider the following 271-residue polypeptide: Short chain dehydrogenase asqE (271 aa).

NADP(+) is bound by residues I22, D70, and N99. Residues S152 and S153 each act as proton donor in the active site. NADP(+)-binding residues include Y167, K171, and T203. The active-site Proton acceptor is the Y167. The active-site Lowers pKa of active site Tyr is K171.

The protein belongs to the short-chain dehydrogenases/reductases (SDR) family.

It carries out the reaction a primary alcohol + NAD(+) = an aldehyde + NADH + H(+). The catalysed reaction is a secondary alcohol + NAD(+) = a ketone + NADH + H(+). It participates in secondary metabolite biosynthesis. Its pathway is alkaloid biosynthesis. The protein operates within mycotoxin biosynthesis. Functionally, short chain dehydrogenase; part of the gene cluster that mediates the biosynthesis of the aspoquinolone mycotoxins. The role of asqE within the aspoquinolone pathway has still to be determined. The first step of the pathway is catalyzed by the nonribosomal peptide synthetase asqK that condenses anthranilic acid and O-methyl-L-tyrosine to produce 4'-methoxycyclopeptin. 4'-methoxycyclopeptin is then converted to 4'-methoxydehydrocyclopeptin by the ketoglutarate-dependent dioxygenase asqJ. AsqJ also converts its first product 4'-methoxydehydrocyclopeptin to 4'-methoxycyclopenin. The following conversion of 4'-methoxycyclopenin into 4'-methoxyviridicatin is catalyzed by the cyclopenase asqI. 4'-methoxyviridicatin is the precursor of quinolone natural products, and is further converted to quinolinone B. The prenyltransferase asqH1 then catalyzes the canonical Friedel-Crafts alkylation of quinolinone B with dimethylallyl cation to yield dimethylallyl quinolone, which is subjected to FAD-dependent dehydrogenation by the FAD-linked oxidoreductase asqF to yield conjugated aryl diene. The delta(3') double bond then serves as the site of the second alkylation with DMAPP catalyzed by the prenyltransferase asqH2 to yield a carbenium ion intermediate, which can be attacked by H(2)O to yield a styrenyl quinolone containing a C3'-hydroxyprenyl chain. The FAD-dependent monooxygenase asqG performs epoxidation of the terminal C7'-C8' olefin. Finally, after dehydratation of the epoxide at C3 by asqC, the quinolone epoxide rearrangement protein asqO catalyzes an enzymatic 3-exo-tet cyclization to yield the cyclopropyl-THF ring system in aspoquinolone. The protein is Short chain dehydrogenase asqE of Emericella nidulans (strain FGSC A4 / ATCC 38163 / CBS 112.46 / NRRL 194 / M139) (Aspergillus nidulans).